Here is a 736-residue protein sequence, read N- to C-terminus: Exo-oligoalginate lyase (736 aa).

An N-terminal signal peptide occupies residues 1–23 (MLSVNTIKNTLLAAVLVSVPATA). Residues Lys136, 146-149 (QSLN), Lys198, His202, and 257-260 (YYQR) contribute to the substrate site. The active-site Proton donor is Tyr258. The active-site Proton acceptor is the His413. Zn(2+) is bound by residues His415 and Asp433. Residue Arg438 coordinates substrate. His464 is a Zn(2+) binding site. Residue Glu667 participates in substrate binding.

Belongs to the polysaccharide lyase 17 family. As to quaternary structure, homodimer. It depends on Zn(2+) as a cofactor.

Its subcellular location is the periplasm. It catalyses the reaction Cleavage of 4-deoxy-alpha-L-erythro-hex-4-enopyranuronoside oligosaccharides into 4-deoxy-alpha-L-erythro-hex-4-enopyranuronate monosaccharides.. In terms of biological role, catalyzes the depolymerization of alginate through an exolytic mode of action, via a beta-elimination mechanism. Preferentially acts on oligoalginates with degrees of polymerization higher than 2 to produce the alginate monomer, 4-deoxy-L-erythro-5-hexoseulose uronic acid. This is Exo-oligoalginate lyase from Saccharophagus degradans (strain 2-40 / ATCC 43961 / DSM 17024).